Reading from the N-terminus, the 435-residue chain is Trigger factor (435 aa).

The region spanning 162 to 247 (GDRVIIDFKG…VKNVAEATLP (86 aa)) is the PPIase FKBP-type domain.

The protein belongs to the FKBP-type PPIase family. Tig subfamily.

Its subcellular location is the cytoplasm. The catalysed reaction is [protein]-peptidylproline (omega=180) = [protein]-peptidylproline (omega=0). In terms of biological role, involved in protein export. Acts as a chaperone by maintaining the newly synthesized protein in an open conformation. Functions as a peptidyl-prolyl cis-trans isomerase. The polypeptide is Trigger factor (Chromobacterium violaceum (strain ATCC 12472 / DSM 30191 / JCM 1249 / CCUG 213 / NBRC 12614 / NCIMB 9131 / NCTC 9757 / MK)).